Reading from the N-terminus, the 37-residue chain is MKIRASVRKICEKCRLIRRRRRIMIICLNPKHKQRQG.

Belongs to the bacterial ribosomal protein bL36 family.

Its subcellular location is the plastid. It is found in the chloroplast. The chain is Large ribosomal subunit protein bL36c from Angiopteris evecta (Mule's foot fern).